We begin with the raw amino-acid sequence, 442 residues long: tRNA-2-methylthio-N(6)-dimethylallyladenosine synthase (442 aa).

Positions 5–122 (KKVFIKTLGC…LPEMIKQKQK (118 aa)) constitute an MTTase N-terminal domain. 6 residues coordinate [4Fe-4S] cluster: Cys14, Cys51, Cys85, Cys159, Cys163, and Cys166. The Radical SAM core domain maps to 145 to 378 (KAEGAKAYVS…DLLNSNAQII (234 aa)). The 63-residue stretch at 380-442 (RQMVGTNQRI…LPNSLRGELI (63 aa)) folds into the TRAM domain.

Belongs to the methylthiotransferase family. MiaB subfamily. Monomer. Requires [4Fe-4S] cluster as cofactor.

It localises to the cytoplasm. The catalysed reaction is N(6)-dimethylallyladenosine(37) in tRNA + (sulfur carrier)-SH + AH2 + 2 S-adenosyl-L-methionine = 2-methylsulfanyl-N(6)-dimethylallyladenosine(37) in tRNA + (sulfur carrier)-H + 5'-deoxyadenosine + L-methionine + A + S-adenosyl-L-homocysteine + 2 H(+). In terms of biological role, catalyzes the methylthiolation of N6-(dimethylallyl)adenosine (i(6)A), leading to the formation of 2-methylthio-N6-(dimethylallyl)adenosine (ms(2)i(6)A) at position 37 in tRNAs that read codons beginning with uridine. The polypeptide is tRNA-2-methylthio-N(6)-dimethylallyladenosine synthase (Francisella tularensis subsp. holarctica (strain FTNF002-00 / FTA)).